Reading from the N-terminus, the 219-residue chain is Outer membrane virulence protein YopE (219 aa).

The interval 1 to 37 is disordered; sequence MKISSFISTSLPLPTSVSGSSSVGEMSGRSVSQQTSD. Residues 8 to 32 are compositionally biased toward low complexity; it reads STSLPLPTSVSGSSSVGEMSGRSVS. In terms of domain architecture, Bacterial Rho-GAP spans 101 to 219; the sequence is SFSDSIKQLA…QQMQKLLSLM (119 aa).

It belongs to the YopE family.

The protein localises to the cell outer membrane. Essential virulence determinant; cytotoxic effector, involved in resistance to phagocytosis. This is Outer membrane virulence protein YopE (yopE) from Yersinia pestis.